The sequence spans 130 residues: Small ribosomal subunit protein uS9 (130 aa).

Belongs to the universal ribosomal protein uS9 family.

The protein is Small ribosomal subunit protein uS9 of Serratia proteamaculans (strain 568).